The sequence spans 90 residues: Small ribosomal subunit protein uS15 (90 aa).

This sequence belongs to the universal ribosomal protein uS15 family. Part of the 30S ribosomal subunit. Forms a bridge to the 50S subunit in the 70S ribosome, contacting the 23S rRNA.

Its function is as follows. One of the primary rRNA binding proteins, it binds directly to 16S rRNA where it helps nucleate assembly of the platform of the 30S subunit by binding and bridging several RNA helices of the 16S rRNA. In terms of biological role, forms an intersubunit bridge (bridge B4) with the 23S rRNA of the 50S subunit in the ribosome. The sequence is that of Small ribosomal subunit protein uS15 from Campylobacter jejuni subsp. doylei (strain ATCC BAA-1458 / RM4099 / 269.97).